The chain runs to 201 residues: Recombination protein RecR (201 aa).

The C4-type zinc-finger motif lies at 57 to 72 (CADCRTFTEQDVCNIC). The 96-residue stretch at 81–176 (GQICVVESPA…SASRIAHGVP (96 aa)) folds into the Toprim domain.

This sequence belongs to the RecR family.

Its function is as follows. May play a role in DNA repair. It seems to be involved in an RecBC-independent recombinational process of DNA repair. It may act with RecF and RecO. The protein is Recombination protein RecR of Enterobacter sp. (strain 638).